A 187-amino-acid chain; its full sequence is Signal peptidase complex catalytic subunit SEC11 (187 aa).

Topologically, residues Met-1–Gln-18 are cytoplasmic. A helical; Signal-anchor for type II membrane protein transmembrane segment spans residues Val-19–Ile-39. The Lumenal segment spans residues Thr-40 to Glu-187. Active-site charge relay system residues include Ser-53 and His-92. A glycan (N-linked (GlcNAc...) asparagine) is linked at Asn-125. The Charge relay system role is filled by Asp-129. Residues Val-173–Leu-184 are C-terminal short (CTS) helix.

It belongs to the peptidase S26B family. Component of the signal peptidase complex (SPC) composed of a catalytic subunit SEC11 and three accessory subunits SPC1, SPC2 and SPC3. The complex induces a local thinning of the ER membrane which is used to measure the length of the signal peptide (SP) h-region of protein substrates. This ensures the selectivity of the complex towards h-regions shorter than 18-20 amino acids. SPC associates with the translocon complex.

Its subcellular location is the endoplasmic reticulum membrane. It carries out the reaction Cleavage of hydrophobic, N-terminal signal or leader sequences from secreted and periplasmic proteins.. Functionally, catalytic component of the signal peptidase complex (SPC) which catalyzes the cleavage of N-terminal signal sequences from nascent proteins as they are translocated into the lumen of the endoplasmic reticulum. Specifically cleaves N-terminal signal peptides that contain a hydrophobic alpha-helix (h-region) shorter than 18-20 amino acids. The polypeptide is Signal peptidase complex catalytic subunit SEC11 (SEC11) (Ajellomyces capsulatus (strain G186AR / H82 / ATCC MYA-2454 / RMSCC 2432) (Darling's disease fungus)).